The primary structure comprises 193 residues: Ribonuclease HII (193 aa).

The region spanning 15 to 193 (YIVAGIDEAG…PYHRRSFKCC (179 aa)) is the RNase H type-2 domain. The a divalent metal cation site is built by Asp-21, Glu-22, and Asp-112.

This sequence belongs to the RNase HII family. Mn(2+) is required as a cofactor. Mg(2+) serves as cofactor.

It is found in the cytoplasm. It catalyses the reaction Endonucleolytic cleavage to 5'-phosphomonoester.. Functionally, endonuclease that specifically degrades the RNA of RNA-DNA hybrids. The sequence is that of Ribonuclease HII from Rickettsia felis (strain ATCC VR-1525 / URRWXCal2) (Rickettsia azadi).